A 96-amino-acid chain; its full sequence is Aspartyl/glutamyl-tRNA(Asn/Gln) amidotransferase subunit C (96 aa).

It belongs to the GatC family. In terms of assembly, heterotrimer of A, B and C subunits.

The catalysed reaction is L-glutamyl-tRNA(Gln) + L-glutamine + ATP + H2O = L-glutaminyl-tRNA(Gln) + L-glutamate + ADP + phosphate + H(+). It carries out the reaction L-aspartyl-tRNA(Asn) + L-glutamine + ATP + H2O = L-asparaginyl-tRNA(Asn) + L-glutamate + ADP + phosphate + 2 H(+). Its function is as follows. Allows the formation of correctly charged Asn-tRNA(Asn) or Gln-tRNA(Gln) through the transamidation of misacylated Asp-tRNA(Asn) or Glu-tRNA(Gln) in organisms which lack either or both of asparaginyl-tRNA or glutaminyl-tRNA synthetases. The reaction takes place in the presence of glutamine and ATP through an activated phospho-Asp-tRNA(Asn) or phospho-Glu-tRNA(Gln). This chain is Aspartyl/glutamyl-tRNA(Asn/Gln) amidotransferase subunit C, found in Bacillus cytotoxicus (strain DSM 22905 / CIP 110041 / 391-98 / NVH 391-98).